A 530-amino-acid chain; its full sequence is Probable serine/threonine-protein kinase fnkB (530 aa).

One can recognise a Protein kinase domain in the interval tryptophan 11–leucine 268. Residues leucine 17–asparagine 25 and lysine 43 contribute to the ATP site. Aspartate 131 (proton acceptor) is an active-site residue.

This sequence belongs to the protein kinase superfamily. STE Ser/Thr protein kinase family. Requires Mg(2+) as cofactor.

It catalyses the reaction L-seryl-[protein] + ATP = O-phospho-L-seryl-[protein] + ADP + H(+). The catalysed reaction is L-threonyl-[protein] + ATP = O-phospho-L-threonyl-[protein] + ADP + H(+). This is Probable serine/threonine-protein kinase fnkB from Dictyostelium discoideum (Social amoeba).